Consider the following 201-residue polypeptide: Small ribosomal subunit protein uS4 (201 aa).

The S4 RNA-binding domain maps to 93–156; sequence RRLDNMVYRL…KNLDIIKNAV (64 aa).

The protein belongs to the universal ribosomal protein uS4 family. As to quaternary structure, part of the 30S ribosomal subunit. Contacts protein S5. The interaction surface between S4 and S5 is involved in control of translational fidelity.

Its function is as follows. One of the primary rRNA binding proteins, it binds directly to 16S rRNA where it nucleates assembly of the body of the 30S subunit. Functionally, with S5 and S12 plays an important role in translational accuracy. The sequence is that of Small ribosomal subunit protein uS4 from Limosilactobacillus reuteri subsp. reuteri (strain JCM 1112) (Lactobacillus reuteri).